A 179-amino-acid polypeptide reads, in one-letter code: ATP-dependent protease subunit HslV (179 aa).

Threonine 8 is a catalytic residue. The Na(+) site is built by glycine 163, cysteine 166, and threonine 169.

Belongs to the peptidase T1B family. HslV subfamily. As to quaternary structure, a double ring-shaped homohexamer of HslV is capped on each side by a ring-shaped HslU homohexamer. The assembly of the HslU/HslV complex is dependent on binding of ATP.

Its subcellular location is the cytoplasm. The catalysed reaction is ATP-dependent cleavage of peptide bonds with broad specificity.. Allosterically activated by HslU binding. Its function is as follows. Protease subunit of a proteasome-like degradation complex believed to be a general protein degrading machinery. The polypeptide is ATP-dependent protease subunit HslV (Solibacter usitatus (strain Ellin6076)).